The following is a 64-amino-acid chain: U2-aranetoxin-Av1a (64 aa).

In terms of tissue distribution, expressed in fat body, but not in cephalothorax, silk gland, midgut.

Its function is as follows. Insecticidal toxin. The chain is U2-aranetoxin-Av1a from Araneus ventricosus (Orbweaver spider).